The sequence spans 73 residues: Large ribosomal subunit protein bL31 (73 aa).

The Zn(2+) site is built by Cys16, Cys18, Cys37, and Cys40.

It belongs to the bacterial ribosomal protein bL31 family. Type A subfamily. As to quaternary structure, part of the 50S ribosomal subunit. It depends on Zn(2+) as a cofactor.

Functionally, binds the 23S rRNA. The chain is Large ribosomal subunit protein bL31 from Pseudomonas savastanoi pv. phaseolicola (strain 1448A / Race 6) (Pseudomonas syringae pv. phaseolicola (strain 1448A / Race 6)).